Reading from the N-terminus, the 584-residue chain is Endogenous retrovirus group FC1 Env polyprotein (584 aa).

An N-terminal signal peptide occupies residues 1–22 (MARPSPLCLLLLLTLLTPIVPS). The Extracellular portion of the chain corresponds to 23-518 (NSLLTEPPFR…GWWQSPLTTW (496 aa)). Residues asparagine 69 and asparagine 247 are each glycosylated (N-linked (GlcNAc...) asparagine). The short motif at 251 to 254 (CFLC) is the CXXC element. N-linked (GlcNAc...) asparagine glycans are attached at residues asparagine 272, asparagine 276, asparagine 308, asparagine 313, asparagine 322, asparagine 334, asparagine 342, and asparagine 346. The fusion peptide stretch occupies residues 384–404 (AVFPPLVIGVSLTSSLVASGL). The short motif at 449-465 (MQNRRALDLLTADKGGT) is the CKS-17 element. Cysteine 466 and cysteine 473 are disulfide-bonded. Positions 466-474 (CMFLGEECC) match the CX6CC motif. Asparagine 478 is a glycosylation site (N-linked (GlcNAc...) asparagine). Residues 519–539 (IIPFISPILIICLLLLIAPCV) form a helical membrane-spanning segment. At 540 to 584 (LKFIKNRISEVSRVTVNQMLLHPYSRLPTSEDHYDDALTQQEAAR) the chain is on the cytoplasmic side.

Belongs to the gamma type-C retroviral envelope protein family. HERV class-I F(c)1 env subfamily. The surface (SU) and transmembrane (TM) proteins form a heterodimer. SU and TM are attached by noncovalent interactions or by a labile interchain disulfide bond. Specific enzymatic cleavages in vivo yield the mature SU and TM proteins. Post-translationally, the CXXC motif is highly conserved across a broad range of retroviral envelope proteins. It is thought to participate in the formation of a labile disulfide bond possibly with the CX6CC motif present in the transmembrane protein. Low expression in skin, testis and trachea.

It localises to the virion. Its subcellular location is the cell membrane. Functionally, retroviral envelope proteins mediate receptor recognition and membrane fusion during early infection. Endogenous envelope proteins may have kept, lost or modified their original function during evolution. This endogenous envelope protein has lost its original fusogenic properties. SU mediates receptor recognition. In terms of biological role, TM anchors the envelope heterodimer to the viral membrane through one transmembrane domain. The other hydrophobic domain, called fusion peptide, mediates fusion of the viral membrane with the target cell membrane. This Homo sapiens (Human) protein is Endogenous retrovirus group FC1 Env polyprotein (ERVFC1).